The sequence spans 205 residues: ATP-dependent Clp protease proteolytic subunit (205 aa).

Ser-109 acts as the Nucleophile in catalysis. Residue His-134 is part of the active site.

It belongs to the peptidase S14 family. Fourteen ClpP subunits assemble into 2 heptameric rings which stack back to back to give a disk-like structure with a central cavity, resembling the structure of eukaryotic proteasomes.

The protein localises to the cytoplasm. The catalysed reaction is Hydrolysis of proteins to small peptides in the presence of ATP and magnesium. alpha-casein is the usual test substrate. In the absence of ATP, only oligopeptides shorter than five residues are hydrolyzed (such as succinyl-Leu-Tyr-|-NHMec, and Leu-Tyr-Leu-|-Tyr-Trp, in which cleavage of the -Tyr-|-Leu- and -Tyr-|-Trp bonds also occurs).. Cleaves peptides in various proteins in a process that requires ATP hydrolysis. Has a chymotrypsin-like activity. Plays a major role in the degradation of misfolded proteins. The polypeptide is ATP-dependent Clp protease proteolytic subunit (Baumannia cicadellinicola subsp. Homalodisca coagulata).